Reading from the N-terminus, the 983-residue chain is Alanine--tRNA ligase, mitochondrial (983 aa).

A mitochondrion-targeting transit peptide spans 1–24 (MTSTTGLRNLTLSFKKQLTTSTRT). Position 504 is a phosphoserine (serine 504). Zn(2+)-binding residues include histidine 625, histidine 629, cysteine 744, and histidine 748. Serine 975 carries the post-translational modification Phosphoserine.

Belongs to the class-II aminoacyl-tRNA synthetase family. In terms of assembly, monomer. Requires Zn(2+) as cofactor.

The protein localises to the cytoplasm. It is found in the mitochondrion. The catalysed reaction is tRNA(Ala) + L-alanine + ATP = L-alanyl-tRNA(Ala) + AMP + diphosphate. Its function is as follows. Catalyzes the attachment of alanine to tRNA(Ala) in a two-step reaction: alanine is first activated by ATP to form Ala-AMP and then transferred to the acceptor end of tRNA(Ala). Also edits incorrectly charged tRNA(Ala) via its editing domain. The polypeptide is Alanine--tRNA ligase, mitochondrial (Saccharomyces cerevisiae (strain ATCC 204508 / S288c) (Baker's yeast)).